Reading from the N-terminus, the 85-residue chain is MAQIFNPNPGNTLDTVANALKEQANAANKDVNDAIKALQGTDNADNPALLAELQHKINKWSVIYNINSTVTRALRDLMQGILQKI.

Residues 13-41 (LDTVANALKEQANAANKDVNDAIKALQGT) adopt a coiled-coil conformation.

As to quaternary structure, the core secretion machinery of the T3SS is composed of approximately 20 different proteins, including cytoplasmic components, a base, an export apparatus and a needle. This subunit polymerizes and forms the helical needle filament. Forms a stable heterotrimeric complex with PscE and PscG in the cytoplasm, blocking it in a monomeric state and preventing its polymerization.

The protein localises to the secreted. The protein resides in the cell surface. Component of the type III secretion system (T3SS), also called injectisome, which is used to inject bacterial effector proteins into eukaryotic host cells, facilitating the establishment and dissemination of infection. PscF/SctF forms the external needle filament that protrudes from the bacterial surface. The protein is Type 3 secretion system needle filament protein of Pseudomonas aeruginosa (strain ATCC 15692 / DSM 22644 / CIP 104116 / JCM 14847 / LMG 12228 / 1C / PRS 101 / PAO1).